A 178-amino-acid chain; its full sequence is ATP synthase subunit b, chloroplastic (178 aa).

The helical transmembrane segment at isoleucine 23–glycine 43 threads the bilayer.

Belongs to the ATPase B chain family. F-type ATPases have 2 components, F(1) - the catalytic core - and F(0) - the membrane proton channel. F(1) has five subunits: alpha(3), beta(3), gamma(1), delta(1), epsilon(1). F(0) has four main subunits: a(1), b(1), b'(1) and c(10-14). The alpha and beta chains form an alternating ring which encloses part of the gamma chain. F(1) is attached to F(0) by a central stalk formed by the gamma and epsilon chains, while a peripheral stalk is formed by the delta, b and b' chains.

Its subcellular location is the plastid. The protein localises to the chloroplast thylakoid membrane. Its function is as follows. F(1)F(0) ATP synthase produces ATP from ADP in the presence of a proton or sodium gradient. F-type ATPases consist of two structural domains, F(1) containing the extramembraneous catalytic core and F(0) containing the membrane proton channel, linked together by a central stalk and a peripheral stalk. During catalysis, ATP synthesis in the catalytic domain of F(1) is coupled via a rotary mechanism of the central stalk subunits to proton translocation. In terms of biological role, component of the F(0) channel, it forms part of the peripheral stalk, linking F(1) to F(0). The protein is ATP synthase subunit b, chloroplastic of Tetradesmus obliquus (Green alga).